The primary structure comprises 520 residues: Ribonuclease Y (520 aa).

The chain crosses the membrane as a helical span at residues 1 to 21; the sequence is MEILIIVIAAVVGLALGFAIA. The 86-residue stretch at 210-295 folds into the KH domain; it reads CVSVFNLESD…EVVKKTRKQI (86 aa). The HD domain maps to 336–429; the sequence is LLQHSREVAK…VQVCDAISGA (94 aa).

This sequence belongs to the RNase Y family.

Its subcellular location is the cell membrane. In terms of biological role, endoribonuclease that initiates mRNA decay. This chain is Ribonuclease Y, found in Christiangramia forsetii (strain DSM 17595 / CGMCC 1.15422 / KT0803) (Gramella forsetii).